The primary structure comprises 407 residues: Chorismate synthase (407 aa).

2 residues coordinate NADP(+): Arg43 and Arg49. Residues 143–145 (RSS), 264–265 (QA), Gly308, 323–327 (KPIST), and Arg349 each bind FMN.

This sequence belongs to the chorismate synthase family. Homotetramer. It depends on FMNH2 as a cofactor.

It catalyses the reaction 5-O-(1-carboxyvinyl)-3-phosphoshikimate = chorismate + phosphate. The protein operates within metabolic intermediate biosynthesis; chorismate biosynthesis; chorismate from D-erythrose 4-phosphate and phosphoenolpyruvate: step 7/7. Its function is as follows. Catalyzes the anti-1,4-elimination of the C-3 phosphate and the C-6 proR hydrogen from 5-enolpyruvylshikimate-3-phosphate (EPSP) to yield chorismate, which is the branch point compound that serves as the starting substrate for the three terminal pathways of aromatic amino acid biosynthesis. This reaction introduces a second double bond into the aromatic ring system. In Corynebacterium efficiens (strain DSM 44549 / YS-314 / AJ 12310 / JCM 11189 / NBRC 100395), this protein is Chorismate synthase.